The primary structure comprises 309 residues: Virulence regulon transcriptional activator VirB (309 aa).

Positions 152 to 171 form a DNA-binding region, H-T-H motif; the sequence is KDIAKKENLSRAKVTRAFQA.

The protein belongs to the ParB family.

Transcription activator for the invasion antigens IpaB, IpaC and IpaD. VirB is itself regulated by VirF. The polypeptide is Virulence regulon transcriptional activator VirB (virB) (Shigella flexneri).